We begin with the raw amino-acid sequence, 231 residues long: Adenosylcobinamide-GDP ribazoletransferase (231 aa).

Helical transmembrane passes span 24-44 (LWAF…ILYL), 46-66 (LPLS…LLHL), 96-116 (IAGL…LQLL), 159-176 (LALG…VVLF), 181-198 (LAGI…RISL), and 209-229 (LGAT…LVWW).

It belongs to the CobS family. Mg(2+) is required as a cofactor.

Its subcellular location is the cell membrane. The enzyme catalyses alpha-ribazole + adenosylcob(III)inamide-GDP = adenosylcob(III)alamin + GMP + H(+). It carries out the reaction alpha-ribazole 5'-phosphate + adenosylcob(III)inamide-GDP = adenosylcob(III)alamin 5'-phosphate + GMP + H(+). It functions in the pathway cofactor biosynthesis; adenosylcobalamin biosynthesis; adenosylcobalamin from cob(II)yrinate a,c-diamide: step 7/7. Its function is as follows. Joins adenosylcobinamide-GDP and alpha-ribazole to generate adenosylcobalamin (Ado-cobalamin). Also synthesizes adenosylcobalamin 5'-phosphate from adenosylcobinamide-GDP and alpha-ribazole 5'-phosphate. This Thermococcus kodakarensis (strain ATCC BAA-918 / JCM 12380 / KOD1) (Pyrococcus kodakaraensis (strain KOD1)) protein is Adenosylcobinamide-GDP ribazoletransferase.